We begin with the raw amino-acid sequence, 211 residues long: ATP phosphoribosyltransferase (211 aa).

It belongs to the ATP phosphoribosyltransferase family. Short subfamily. As to quaternary structure, heteromultimer composed of HisG and HisZ subunits.

The protein resides in the cytoplasm. It carries out the reaction 1-(5-phospho-beta-D-ribosyl)-ATP + diphosphate = 5-phospho-alpha-D-ribose 1-diphosphate + ATP. The protein operates within amino-acid biosynthesis; L-histidine biosynthesis; L-histidine from 5-phospho-alpha-D-ribose 1-diphosphate: step 1/9. In terms of biological role, catalyzes the condensation of ATP and 5-phosphoribose 1-diphosphate to form N'-(5'-phosphoribosyl)-ATP (PR-ATP). Has a crucial role in the pathway because the rate of histidine biosynthesis seems to be controlled primarily by regulation of HisG enzymatic activity. The polypeptide is ATP phosphoribosyltransferase (Pseudomonas fluorescens (strain Pf0-1)).